The chain runs to 499 residues: Alpha-amylase 3 (499 aa).

Asn127 and Asp183 together coordinate Ca(2+). The active-site Nucleophile is the Asp213. His217 contacts Ca(2+). Glu248 serves as the catalytic Proton donor.

The protein belongs to the glycosyl hydrolase 13 family. Monomer. It depends on Ca(2+) as a cofactor.

The protein resides in the cytoplasm. It catalyses the reaction Endohydrolysis of (1-&gt;4)-alpha-D-glucosidic linkages in polysaccharides containing three or more (1-&gt;4)-alpha-linked D-glucose units.. The chain is Alpha-amylase 3 (amyC) from Dictyoglomus thermophilum (strain ATCC 35947 / DSM 3960 / H-6-12).